A 274-amino-acid chain; its full sequence is uncharacterized protein (274 aa).

This is an uncharacterized protein from Acidianus hospitalis (AFV-1).